The sequence spans 119 residues: UPF0102 protein Nmul_A0195 (119 aa).

The protein belongs to the UPF0102 family.

This chain is UPF0102 protein Nmul_A0195, found in Nitrosospira multiformis (strain ATCC 25196 / NCIMB 11849 / C 71).